Here is a 382-residue protein sequence, read N- to C-terminus: Chaperone protein DnaJ (382 aa).

The J domain maps to 5–70 (DFYEILGVPK…QKRAAYDQYG (66 aa)). The CR-type zinc-finger motif lies at 137 to 215 (GVTKEIRIPT…CHGHGRVEKT (79 aa)). Zn(2+)-binding residues include Cys-150, Cys-153, Cys-167, Cys-170, Cys-189, Cys-192, Cys-203, and Cys-206. 4 CXXCXGXG motif repeats span residues 150 to 157 (CDICHGSG), 167 to 174 (CPTCHGSG), 189 to 196 (CPHCHGRG), and 203 to 210 (CNKCHGHG).

It belongs to the DnaJ family. Homodimer. Zn(2+) serves as cofactor.

Its subcellular location is the cytoplasm. Its function is as follows. Participates actively in the response to hyperosmotic and heat shock by preventing the aggregation of stress-denatured proteins and by disaggregating proteins, also in an autonomous, DnaK-independent fashion. Unfolded proteins bind initially to DnaJ; upon interaction with the DnaJ-bound protein, DnaK hydrolyzes its bound ATP, resulting in the formation of a stable complex. GrpE releases ADP from DnaK; ATP binding to DnaK triggers the release of the substrate protein, thus completing the reaction cycle. Several rounds of ATP-dependent interactions between DnaJ, DnaK and GrpE are required for fully efficient folding. Also involved, together with DnaK and GrpE, in the DNA replication of plasmids through activation of initiation proteins. This Enterobacter sp. (strain 638) protein is Chaperone protein DnaJ.